The sequence spans 234 residues: Protein spitz (234 aa).

An N-terminal signal peptide occupies residues 1–28 (MHSTMSVQHGLVALVLIGCLAHPWHVEA). The Lumenal segment spans residues 29-143 (CSSRTVPKPR…RPRPMLEKAS (115 aa)). The interval 33–71 (TVPKPRSSISSSMSGTALPPTQAPVTSSTTMRTTTTTTP) is disordered. Positions 56–71 (PVTSSTTMRTTTTTTP) are enriched in low complexity. Asparagine 74 carries an N-linked (GlcNAc...) asparagine glycan. The EGF-like domain maps to 78–122 (PTYKCPETFDAWYCLNDAHCFAVKIADLPVYSCECAIGFMGQRCE). 3 disulfides stabilise this stretch: cysteine 82–cysteine 97, cysteine 91–cysteine 110, and cysteine 112–cysteine 121. The helical transmembrane segment at 144–164 (IASGAMCALVFMLFVCLAFYL) threads the bilayer. Residues 165 to 234 (RFEQRAAKKA…SFAIRRSNKL (70 aa)) are Cytoplasmic-facing.

Interacts with Star via the lumenal domain. Proteolytic processing by Rhomboid occurs in the Golgi. Cleavage takes place within the transmembrane domain close to residue 144 and the active growth factor is released. Post-translationally, N-glycosylated and O-glycosylated. Expressed throughout the embryo.

The protein resides in the cell membrane. Its subcellular location is the endoplasmic reticulum membrane. It localises to the golgi apparatus membrane. In terms of biological role, ligand for the EGF receptor (Gurken). Involved in a number of unrelated developmental choices, for example, dorsal-ventral axis formation, glial migration, sensory organ determination, and muscle development. It is required for photoreceptor determination. This is Protein spitz (spi) from Drosophila melanogaster (Fruit fly).